The sequence spans 314 residues: UDP-N-acetylenolpyruvoylglucosamine reductase (314 aa).

The FAD-binding PCMH-type domain occupies 25-191; it reads KIGGPADLFA…VRVGMELRWG (167 aa). Arg170 is an active-site residue. Ser220 functions as the Proton donor in the catalytic mechanism. Glu291 is a catalytic residue.

The protein belongs to the MurB family. FAD serves as cofactor.

It is found in the cytoplasm. It catalyses the reaction UDP-N-acetyl-alpha-D-muramate + NADP(+) = UDP-N-acetyl-3-O-(1-carboxyvinyl)-alpha-D-glucosamine + NADPH + H(+). It functions in the pathway cell wall biogenesis; peptidoglycan biosynthesis. Functionally, cell wall formation. The protein is UDP-N-acetylenolpyruvoylglucosamine reductase of Heliobacterium modesticaldum (strain ATCC 51547 / Ice1).